Consider the following 121-residue polypeptide: uncharacterized protein (121 aa).

The interval 101 to 121 (SIEPTATGSPETRDPDPSAYA) is disordered. Basic and acidic residues predominate over residues 111–121 (ETRDPDPSAYA).

Its subcellular location is the mitochondrion. This is an uncharacterized protein from Arabidopsis thaliana (Mouse-ear cress).